We begin with the raw amino-acid sequence, 190 residues long: Large ribosomal subunit protein uL6A (190 aa).

It belongs to the universal ribosomal protein uL6 family. In terms of assembly, component of the large ribosomal subunit (LSU). Mature yeast ribosomes consist of a small (40S) and a large (60S) subunit. The 40S small subunit contains 1 molecule of ribosomal RNA (18S rRNA) and at least 33 different proteins. The large 60S subunit contains 3 rRNA molecules (25S, 5.8S and 5S rRNA) and at least 46 different proteins. uL6 lines the binding pocket for eukaryotic elongation factor 2 (eEF2).

Its subcellular location is the cytoplasm. The protein resides in the nucleus. Component of the ribosome, a large ribonucleoprotein complex responsible for the synthesis of proteins in the cell. The small ribosomal subunit (SSU) binds messenger RNAs (mRNAs) and translates the encoded message by selecting cognate aminoacyl-transfer RNA (tRNA) molecules. The large subunit (LSU) contains the ribosomal catalytic site termed the peptidyl transferase center (PTC), which catalyzes the formation of peptide bonds, thereby polymerizing the amino acids delivered by tRNAs into a polypeptide chain. The nascent polypeptides leave the ribosome through a tunnel in the LSU and interact with protein factors that function in enzymatic processing, targeting, and the membrane insertion of nascent chains at the exit of the ribosomal tunnel. The chain is Large ribosomal subunit protein uL6A (rpl901) from Schizosaccharomyces pombe (strain 972 / ATCC 24843) (Fission yeast).